The sequence spans 261 residues: NAD(P)H-quinone oxidoreductase subunit K, chloroplastic (261 aa).

[4Fe-4S] cluster-binding residues include cysteine 43, cysteine 44, cysteine 108, and cysteine 139.

Belongs to the complex I 20 kDa subunit family. NDH is composed of at least 16 different subunits, 5 of which are encoded in the nucleus. [4Fe-4S] cluster is required as a cofactor.

It localises to the plastid. Its subcellular location is the chloroplast thylakoid membrane. It catalyses the reaction a plastoquinone + NADH + (n+1) H(+)(in) = a plastoquinol + NAD(+) + n H(+)(out). The enzyme catalyses a plastoquinone + NADPH + (n+1) H(+)(in) = a plastoquinol + NADP(+) + n H(+)(out). Functionally, NDH shuttles electrons from NAD(P)H:plastoquinone, via FMN and iron-sulfur (Fe-S) centers, to quinones in the photosynthetic chain and possibly in a chloroplast respiratory chain. The immediate electron acceptor for the enzyme in this species is believed to be plastoquinone. Couples the redox reaction to proton translocation, and thus conserves the redox energy in a proton gradient. This is NAD(P)H-quinone oxidoreductase subunit K, chloroplastic from Cycas taitungensis (Prince sago).